A 365-amino-acid polypeptide reads, in one-letter code: Zinc finger protein lsy-2 (365 aa).

Residues 1-36 form a disordered region; that stretch reads MLTRRNAKQSQRNSADQSLSEFNSSSMTHGSNQSVY. A compositionally biased stretch (polar residues) spans 8–36; it reads KQSQRNSADQSLSEFNSSSMTHGSNQSVY. C2H2-type zinc fingers lie at residues 78–100, 106–128, 134–156, 264–287, and 296–318; these read HQCN…AVIH, FRCD…RSVH, HACP…LRTH, HDCP…TLEH, and FFCE…MSYH.

It localises to the nucleus speckle. Functionally, involved in transcriptional regulation. Required to specify left-right asymmetry of the ASE gustatory neurons, probably acting upstream of microRNA lsy-6. Involved in maintaining the distinction between somatic and germ cells, perhaps acting by repressing germ cell-specific genes in somatic cells. In Caenorhabditis elegans, this protein is Zinc finger protein lsy-2.